The chain runs to 748 residues: 5-methyltetrahydropteroyltriglutamate--homocysteine methyltransferase (748 aa).

Residues 18 to 21 (REWK) and Lys112 contribute to the 5-methyltetrahydropteroyltri-L-glutamate site. L-homocysteine is bound by residues 420 to 422 (IGS) and Glu473. Residues 420–422 (IGS) and Glu473 each bind L-methionine. Trp550 serves as a coordination point for 5-methyltetrahydropteroyltri-L-glutamate. L-homocysteine is bound at residue Asp588. Asp588 lines the L-methionine pocket. Glu594 is a 5-methyltetrahydropteroyltri-L-glutamate binding site. His630, Cys632, and Glu654 together coordinate Zn(2+). The active-site Proton donor is the His683. A Zn(2+)-binding site is contributed by Cys715.

The protein belongs to the vitamin-B12 independent methionine synthase family. Requires Zn(2+) as cofactor.

It catalyses the reaction 5-methyltetrahydropteroyltri-L-glutamate + L-homocysteine = tetrahydropteroyltri-L-glutamate + L-methionine. It functions in the pathway amino-acid biosynthesis; L-methionine biosynthesis via de novo pathway; L-methionine from L-homocysteine (MetE route): step 1/1. Its function is as follows. Catalyzes the transfer of a methyl group from 5-methyltetrahydrofolate to homocysteine resulting in methionine formation. The sequence is that of 5-methyltetrahydropteroyltriglutamate--homocysteine methyltransferase from Staphylococcus epidermidis (strain ATCC 12228 / FDA PCI 1200).